The following is a 365-amino-acid chain: Glucan endo-1,3-beta-glucosidase, basic vacuolar isoform (365 aa).

Positions 1 to 32 (MSTLHKHNTPQMAAITLLGLLLVASSIEIAGA) are cleaved as a signal peptide. The active-site Proton donor is the glutamate 128. Catalysis depends on glutamate 273, which acts as the Nucleophile. A propeptide spans 349–365 (VSGSVETNATASLISEI) (removed in mature form). N-linked (GlcNAc...) asparagine glycosylation occurs at asparagine 356.

Belongs to the glycosyl hydrolase 17 family.

It is found in the vacuole. It carries out the reaction Hydrolysis of (1-&gt;3)-beta-D-glucosidic linkages in (1-&gt;3)-beta-D-glucans.. Its function is as follows. Implicated in the defense of plants against pathogens. This chain is Glucan endo-1,3-beta-glucosidase, basic vacuolar isoform (GN2), found in Nicotiana plumbaginifolia (Leadwort-leaved tobacco).